The chain runs to 177 residues: ATP synthase subunit b (177 aa).

Residues 15–35 (GISGGTIIYQLLMFIILLALL) form a helical membrane-spanning segment.

This sequence belongs to the ATPase B chain family. F-type ATPases have 2 components, F(1) - the catalytic core - and F(0) - the membrane proton channel. F(1) has five subunits: alpha(3), beta(3), gamma(1), delta(1), epsilon(1). F(0) has three main subunits: a(1), b(2) and c(10-14). The alpha and beta chains form an alternating ring which encloses part of the gamma chain. F(1) is attached to F(0) by a central stalk formed by the gamma and epsilon chains, while a peripheral stalk is formed by the delta and b chains.

The protein resides in the cell membrane. Functionally, f(1)F(0) ATP synthase produces ATP from ADP in the presence of a proton or sodium gradient. F-type ATPases consist of two structural domains, F(1) containing the extramembraneous catalytic core and F(0) containing the membrane proton channel, linked together by a central stalk and a peripheral stalk. During catalysis, ATP synthesis in the catalytic domain of F(1) is coupled via a rotary mechanism of the central stalk subunits to proton translocation. Component of the F(0) channel, it forms part of the peripheral stalk, linking F(1) to F(0). The protein is ATP synthase subunit b of Geobacillus kaustophilus (strain HTA426).